The chain runs to 537 residues: MTKYIFVTGGVVSSIGKGIVAASLGRLLKNRGLKVTIQKFDPYINIDPGTMSPYQHGEVYVTDDGAETDLDLGHYERFIDINLNKYSNVTTGKIYSEVLRKERKGEYLGATVQVIPHITDALKEKIKRAATTTDSDVIITEVGGTVGDIESLPFLEALRQMKADVGSENVMYIHTTLLPYLKAAGEMKTKPTQHSVKELRGLGIQPNMLVIRTEEPVEQGIKNKLAQFCDVNPEAVIESRDVEHLYQIPLNLQAQSMDQIVCDHLKLDVPQADMTEWSAMVDRVMNLKKTTRIALVGKYVELPDAYLSVVEALKHSGYANDTAIELDWINANDLTAENAKKLLGQADGIIVPGGFGQRGTEGKIQAIRYAREHDVPMLGICLGMQLTCVEFARHVLGMEKANSFELDPDTAYPIIDIMRDQIDIEDMGGTLRLGLYPCKLKAGSRAAAAYNNQEVVQRRHRHRYEFNNKFRQDFEAAGFVFSGVSPDNRLVEIVELPEKKFFVAAQYHPELQSRPNRPEELYTAFVTAAVKNKNQSL.

The amidoligase domain stretch occupies residues 1–267 (MTKYIFVTGG…DQIVCDHLKL (267 aa)). Position 13 (Ser-13) interacts with CTP. Ser-13 provides a ligand contact to UTP. An ATP-binding site is contributed by 14 to 19 (SIGKGI). L-glutamine is bound at residue Tyr-54. Residue Asp-71 participates in ATP binding. The Mg(2+) site is built by Asp-71 and Glu-141. CTP is bound by residues 148–150 (DIE), 188–193 (KTKPTQ), and Lys-224. UTP contacts are provided by residues 188–193 (KTKPTQ) and Lys-224. An ATP-binding site is contributed by 240-242 (RDV). The Glutamine amidotransferase type-1 domain occupies 292–535 (RIALVGKYVE…VTAAVKNKNQ (244 aa)). Gly-354 is an L-glutamine binding site. Cys-381 functions as the Nucleophile; for glutamine hydrolysis in the catalytic mechanism. Residues 382–385 (LGMQ), Glu-405, and Arg-463 contribute to the L-glutamine site. Residues His-508 and Glu-510 contribute to the active site.

This sequence belongs to the CTP synthase family. Homotetramer.

The enzyme catalyses UTP + L-glutamine + ATP + H2O = CTP + L-glutamate + ADP + phosphate + 2 H(+). It carries out the reaction L-glutamine + H2O = L-glutamate + NH4(+). It catalyses the reaction UTP + NH4(+) + ATP = CTP + ADP + phosphate + 2 H(+). It functions in the pathway pyrimidine metabolism; CTP biosynthesis via de novo pathway; CTP from UDP: step 2/2. With respect to regulation, allosterically activated by GTP, when glutamine is the substrate; GTP has no effect on the reaction when ammonia is the substrate. The allosteric effector GTP functions by stabilizing the protein conformation that binds the tetrahedral intermediate(s) formed during glutamine hydrolysis. Inhibited by the product CTP, via allosteric rather than competitive inhibition. Functionally, catalyzes the ATP-dependent amination of UTP to CTP with either L-glutamine or ammonia as the source of nitrogen. Regulates intracellular CTP levels through interactions with the four ribonucleotide triphosphates. The chain is CTP synthase from Streptococcus equi subsp. equi (strain 4047).